Reading from the N-terminus, the 351-residue chain is Methylthioribose-1-phosphate isomerase (351 aa).

Residues 51-53 (RGA), Arg94, and Gln199 contribute to the substrate site. Residue Asp240 is the Proton donor of the active site. 250–251 (NK) contributes to the substrate binding site.

Belongs to the eIF-2B alpha/beta/delta subunits family. MtnA subfamily. As to quaternary structure, homodimer.

It catalyses the reaction 5-(methylsulfanyl)-alpha-D-ribose 1-phosphate = 5-(methylsulfanyl)-D-ribulose 1-phosphate. It participates in amino-acid biosynthesis; L-methionine biosynthesis via salvage pathway; L-methionine from S-methyl-5-thio-alpha-D-ribose 1-phosphate: step 1/6. Catalyzes the interconversion of methylthioribose-1-phosphate (MTR-1-P) into methylthioribulose-1-phosphate (MTRu-1-P). This Bacillus cereus (strain ATCC 10987 / NRS 248) protein is Methylthioribose-1-phosphate isomerase.